A 459-amino-acid chain; its full sequence is MTSVAGSSVTSAFIDLATYDTIEKHLYGGDSAVAYFVRETKKCTWFSKLPVLLTRCSGSPNFDQEFSVNVSRGGDYVLNSWMTVRIPAIKLKADNRMNNNGTIRWCKNLFHNLIKQTSVQFNDLVAQKFESYFLDYWAAFSMCGSKRAGYNNMIGNTIDMIQPVDHTGMLPEKVLVLPLPYFFSRDSGVALPSAALPYNEIRLTFHLRDYTELLIFQHKQDCTIIPITAADLEYGKPDLKDVQVWITNAVVTNEERRLMGTTPRDILVEQVQTAPKHVFQPLTIPSPNFDIRFSHAIKLLFFGVRNTTHAAVQSNYTTASPVILEEAYASDLSLVAADPIANVTLVYENSARLNEMGSEYYSLVQPYYFGGSIPIETGYHMYCYSLNMMDMDPMGSTNYGRLSNVSMKLKTSDKAVVNAGGGGGNMSGYKDAQKFEFLTMAINHNVIRIKNGSMGFPVL.

The protein belongs to the NCLDV major capsid protein family. As to quaternary structure, homotrimer.

It localises to the virion. In terms of biological role, major capsid protein that self assembles to form an icosahedral capsid. Represents around 50% of the total virion protein mass. This Pleuronectoidei (LCDV-1) protein is Major capsid protein (MCP).